A 388-amino-acid polypeptide reads, in one-letter code: Mannitol-1-phosphate 5-dehydrogenase (388 aa).

5–16 serves as a coordination point for NAD(+); the sequence is AVHFGGGNIGRG. Residue Lys-213 is part of the active site.

It belongs to the mannitol dehydrogenase family. Monomer.

The enzyme catalyses D-mannitol 1-phosphate + NAD(+) = beta-D-fructose 6-phosphate + NADH + H(+). In terms of biological role, catalyzes the NAD(H)-dependent interconversion of D-fructose 6-phosphate and D-mannitol 1-phosphate in the mannitol metabolic pathway. The protein is Mannitol-1-phosphate 5-dehydrogenase of Ajellomyces capsulatus (strain NAm1 / WU24) (Darling's disease fungus).